We begin with the raw amino-acid sequence, 305 residues long: Protoheme IX farnesyltransferase (305 aa).

The next 9 membrane-spanning stretches (helical) occupy residues 29-49 (LIVFCAAIGMLLAVPGAPGLA), 55-75 (LWATLGIWLVASAAAAFNCLI), 101-121 (ALIFSAVLCSAGMAVLHEAVN), 123-143 (LTAWLTLGTFVGYAVIYTVVL), 151-171 (IVIGGISGAMPPLLGWAAMTG), 177-197 (GLILCLIIFLWTPPHFWALAL), 219-241 (FTRLQILLYTFVLLAGTLLPFVQ), 246-268 (WLYLAAAFVLGLRFIHYAWRLWR), and 283-303 (IWHLSLLFAALLVDHYTQDLL).

This sequence belongs to the UbiA prenyltransferase family. Protoheme IX farnesyltransferase subfamily.

Its subcellular location is the cell inner membrane. It carries out the reaction heme b + (2E,6E)-farnesyl diphosphate + H2O = Fe(II)-heme o + diphosphate. The protein operates within porphyrin-containing compound metabolism; heme O biosynthesis; heme O from protoheme: step 1/1. Converts heme B (protoheme IX) to heme O by substitution of the vinyl group on carbon 2 of heme B porphyrin ring with a hydroxyethyl farnesyl side group. The chain is Protoheme IX farnesyltransferase from Leptothrix cholodnii (strain ATCC 51168 / LMG 8142 / SP-6) (Leptothrix discophora (strain SP-6)).